Here is a 118-residue protein sequence, read N- to C-terminus: DNA-directed RNA polymerase subunit omega (118 aa).

Residues 78-104 (DEPEEDSMAMLMGGGQPDKPAEDDMSE) are disordered.

It belongs to the RNA polymerase subunit omega family. As to quaternary structure, the RNAP catalytic core consists of 2 alpha, 1 beta, 1 beta' and 1 omega subunit. When a sigma factor is associated with the core the holoenzyme is formed, which can initiate transcription.

The enzyme catalyses RNA(n) + a ribonucleoside 5'-triphosphate = RNA(n+1) + diphosphate. Functionally, promotes RNA polymerase assembly. Latches the N- and C-terminal regions of the beta' subunit thereby facilitating its interaction with the beta and alpha subunits. In Dinoroseobacter shibae (strain DSM 16493 / NCIMB 14021 / DFL 12), this protein is DNA-directed RNA polymerase subunit omega.